The following is a 209-amino-acid chain: A-type ATP synthase subunit D (209 aa).

Belongs to the V-ATPase D subunit family. In terms of assembly, has multiple subunits with at least A(3), B(3), C, D, E, F, H, I and proteolipid K(x).

The protein resides in the cell membrane. Functionally, component of the A-type ATP synthase that produces ATP from ADP in the presence of a proton gradient across the membrane. This chain is A-type ATP synthase subunit D, found in Methanoregula boonei (strain DSM 21154 / JCM 14090 / 6A8).